We begin with the raw amino-acid sequence, 249 residues long: Phosphate import ATP-binding protein PstB 1 (249 aa).

The region spanning 4 to 244 is the ABC transporter domain; sequence FNIENLDLFY…PKDDRTQGYV (241 aa). 36 to 43 lines the ATP pocket; sequence GPSGCGKS.

Belongs to the ABC transporter superfamily. Phosphate importer (TC 3.A.1.7) family. The complex is composed of two ATP-binding proteins (PstB), two transmembrane proteins (PstC and PstA) and a solute-binding protein (PstS).

It is found in the cell inner membrane. It catalyses the reaction phosphate(out) + ATP + H2O = ADP + 2 phosphate(in) + H(+). Its function is as follows. Part of the ABC transporter complex PstSACB involved in phosphate import. Responsible for energy coupling to the transport system. The sequence is that of Phosphate import ATP-binding protein PstB 1 from Aliivibrio fischeri (strain ATCC 700601 / ES114) (Vibrio fischeri).